A 689-amino-acid polypeptide reads, in one-letter code: Beta-adrenergic receptor kinase 1 (689 aa).

Residues 1-190 (MADLEAVLAD…ELNIHLTMND (190 aa)) are N-terminal. The region spanning 54-175 (TFEKIFSQKL…IESDKFTRFC (122 aa)) is the RGS domain. A Protein kinase domain is found at 191 to 453 (FSVHRIIGRG…AQEIKESPFF (263 aa)). ATP is bound by residues 197-205 (IGRGGFGEV) and Lys220. Asp317 serves as the catalytic Proton acceptor. Residues 454–521 (RSLDWQMVFL…TISERWQQEV (68 aa)) enclose the AGC-kinase C-terminal domain. Residues 558–652 (DCIMHGYMSK…WKKELRDAYR (95 aa)) enclose the PH domain. Ser670 bears the Phosphoserine mark.

It belongs to the protein kinase superfamily. AGC Ser/Thr protein kinase family. GPRK subfamily. In terms of assembly, interacts with the heterodimer formed by GNB1 and GNG2. Interacts with GIT1. Interacts with, and phosphorylates chemokine-stimulated CCR5. Interacts with ARRB1. Interacts with LPAR1 and LPAR2. Interacts with RALA in response to LPAR1 activation. ADRBK1 and RALA mutually inhibit each other's binding to LPAR1. Interacts with ADRB2. As to expression, expressed at low levels in brain cortex, hippocampus, striatum, hypothalamus, cerebellum and brainstem (at protein level).

Its subcellular location is the cytoplasm. It is found in the cell membrane. The protein resides in the postsynapse. It localises to the presynapse. It carries out the reaction [beta-adrenergic receptor] + ATP = [beta-adrenergic receptor]-phosphate + ADP + H(+). With respect to regulation, in contrast to other AGC family kinases, the catalytic activity is solely regulated by the binding of substrates and ligands, not by phosphorylation of the kinase domain. Functionally, specifically phosphorylates the agonist-occupied form of the beta-adrenergic and closely related receptors, probably inducing a desensitization of them. Key regulator of LPAR1 signaling. Competes with RALA for binding to LPAR1 thus affecting the signaling properties of the receptor. Desensitizes LPAR1 and LPAR2 in a phosphorylation-independent manner. Positively regulates ciliary smoothened (SMO)-dependent Hedgehog (Hh) signaling pathway by facilitating the trafficking of SMO into the cilium and the stimulation of SMO activity. Inhibits relaxation of airway smooth muscle in response to blue light. This chain is Beta-adrenergic receptor kinase 1, found in Rattus norvegicus (Rat).